A 514-amino-acid chain; its full sequence is MNEEQRKASSVDVLAERDKKAEKDYSKYFEHVYQPPNLKEAKKRGKQEVRYNRDFQIDEKYRGMGNERTFLIKTYGCQMNAHDTEVIAGILEALGYQATTDINTADVILINTCAIRENAENKVFSEIGNLKHLKKERPDILIGVCGCMSQEESVVNKILKSYQNVDMIFGTHNIHHLPEILEEAYLSKAMVVEVWSKEGDVIENLPKVREGNIKAWVNIMYGCDKFCTYCIVPFTRGKERSRRPEDIIDEVRELAREGYKEITLLGQNVNSYGKDLQDIEYDLGDLLQAISKIAIPRVRFTTSHPWDFTDHMIDVISEGGNIVPHIHLPVQSGNNAVLKIMGRKYTRESYLDLVKRIKDRIPNVALTTDIIVGYPNESEEQFEETLTLYDEVGFEHAYTYLYSQRDGTPAAKMKDNVPLDVKKERLQRLNKKVGHYSQIAMSKYEGQTVTVLCEGSSKKDDQVLAGYTDKNKLVNFKAPKEMIGKLVEVRIDEAKQYSLNGSFVKEVEPEMVIQ.

Residues Met1–Ala21 form a disordered region. The region spanning Arg68–Leu186 is the MTTase N-terminal domain. [4Fe-4S] cluster-binding residues include Cys77, Cys113, Cys147, Cys223, Cys227, and Cys230. In terms of domain architecture, Radical SAM core spans Arg209–Ala440. In terms of domain architecture, TRAM spans Ser442 to Lys505.

It belongs to the methylthiotransferase family. MiaB subfamily. In terms of assembly, monomer. [4Fe-4S] cluster is required as a cofactor.

The protein resides in the cytoplasm. The enzyme catalyses N(6)-dimethylallyladenosine(37) in tRNA + (sulfur carrier)-SH + AH2 + 2 S-adenosyl-L-methionine = 2-methylsulfanyl-N(6)-dimethylallyladenosine(37) in tRNA + (sulfur carrier)-H + 5'-deoxyadenosine + L-methionine + A + S-adenosyl-L-homocysteine + 2 H(+). Catalyzes the methylthiolation of N6-(dimethylallyl)adenosine (i(6)A), leading to the formation of 2-methylthio-N6-(dimethylallyl)adenosine (ms(2)i(6)A) at position 37 in tRNAs that read codons beginning with uridine. This Staphylococcus aureus (strain MRSA252) protein is tRNA-2-methylthio-N(6)-dimethylallyladenosine synthase.